Here is a 217-residue protein sequence, read N- to C-terminus: 3,4-dihydroxy-2-butanone 4-phosphate synthase (217 aa).

Residues 37 to 38 (RE), D42, 150 to 154 (RGGHT), and E174 each bind D-ribulose 5-phosphate. E38 serves as a coordination point for Mg(2+). Position 153 (H153) interacts with Mg(2+).

The protein belongs to the DHBP synthase family. As to quaternary structure, homodimer. Mg(2+) is required as a cofactor. It depends on Mn(2+) as a cofactor.

The catalysed reaction is D-ribulose 5-phosphate = (2S)-2-hydroxy-3-oxobutyl phosphate + formate + H(+). It participates in cofactor biosynthesis; riboflavin biosynthesis; 2-hydroxy-3-oxobutyl phosphate from D-ribulose 5-phosphate: step 1/1. Catalyzes the conversion of D-ribulose 5-phosphate to formate and 3,4-dihydroxy-2-butanone 4-phosphate. The chain is 3,4-dihydroxy-2-butanone 4-phosphate synthase from Sodalis glossinidius (strain morsitans).